Here is a 970-residue protein sequence, read N- to C-terminus: Type III restriction-modification enzyme EcoPI Res subunit (970 aa).

The helicase-like domain stretch occupies residues 75–540 (ARSNVIDVSM…EVGRGLRLPV (466 aa)). The tract at residues 894–918 (TYSPDFAYVVKTAEGDYLNFIIETK) is endonuclease domain.

It belongs to the type III restriction-modification system Res protein family. In terms of assembly, a heterotetramer with stoichiometry Res(2)Mod(2). Mg(2+) is required as a cofactor. The cofactor is S-adenosyl-L-methionine.

The enzyme catalyses Endonucleolytic cleavage of DNA to give specific double-stranded fragments with terminal 5'-phosphates.. In terms of biological role, a type III restriction enzyme that recognizes 2 inversely oriented double-stranded sequences 5'-AGACC-3' and cleaves DNA 25-27 base pairs downstream of one site, producing a single-strand 5' protrusion of two nucleotides. DNA restriction requires both the Res and Mod subunits. DNA topology affects its action; relaxed and negatively supercoiled DNA are digested but positively supercoiled DNA is not a good substrate. After binding to one recognition site undergoes random one-dimensional diffusion along DNA until it collides with a stationary enzyme bound to the second DNA site, which is when DNA cleavage occurs. This Enterobacteriaceae (Bacteriophage P1) protein is Type III restriction-modification enzyme EcoPI Res subunit.